The following is a 589-amino-acid chain: Vomeromodulin (589 aa).

The first 29 residues, 1–29 (MWVLQALAIMLSIQAGVLDLVEVPPVVRS), serve as a signal peptide directing secretion. 2 disordered regions span residues 49–71 (GLND…SRGG) and 146–170 (LLGK…GLGQ). N-linked (GlcNAc...) asparagine glycosylation is found at asparagine 419 and asparagine 437.

N-glycosylated. The N-glycans consist mainly of complex sialylated and fucosylated biantennary structures. As to expression, abundant in the lateral nasal glands. Also present in the posterior septal and vomeronasal glands.

It is found in the secreted. This chain is Vomeromodulin, found in Rattus norvegicus (Rat).